Consider the following 154-residue polypeptide: MPLYESVLIARNDVTQQQVESVADHVASLIEAEGGAIKKREYWGLRTLAYRIKKNRKGHYMLLGLDAKPATITEVERQLRLNEDVLRFMTIRVEEIDDVPSVILSRKSDDRERGFRGPKPPGRFESGRKRGYDDREEFRARAGGDDDDRGLDQE.

Positions 107–154 (KSDDRERGFRGPKPPGRFESGRKRGYDDREEFRARAGGDDDDRGLDQE) are disordered. Residues 125–154 (ESGRKRGYDDREEFRARAGGDDDDRGLDQE) are compositionally biased toward basic and acidic residues.

Belongs to the bacterial ribosomal protein bS6 family.

In terms of biological role, binds together with bS18 to 16S ribosomal RNA. The sequence is that of Small ribosomal subunit protein bS6 from Granulibacter bethesdensis (strain ATCC BAA-1260 / CGDNIH1).